The following is a 459-amino-acid chain: tRNA modification GTPase MnmE (459 aa).

Residues Arg-22, Glu-87, and Arg-126 each contribute to the (6S)-5-formyl-5,6,7,8-tetrahydrofolate site. One can recognise a TrmE-type G domain in the interval Gly-221–Leu-381. Asn-231 contributes to the K(+) binding site. Residues Asn-231 to Ser-236, Thr-250 to Thr-256, and Asp-275 to Gly-278 contribute to the GTP site. Ser-235 provides a ligand contact to Mg(2+). K(+) is bound by residues Thr-250, Ile-252, and Thr-255. A Mg(2+)-binding site is contributed by Thr-256. Lys-459 contributes to the (6S)-5-formyl-5,6,7,8-tetrahydrofolate binding site.

The protein belongs to the TRAFAC class TrmE-Era-EngA-EngB-Septin-like GTPase superfamily. TrmE GTPase family. Homodimer. Heterotetramer of two MnmE and two MnmG subunits. It depends on K(+) as a cofactor.

The protein localises to the cytoplasm. Its function is as follows. Exhibits a very high intrinsic GTPase hydrolysis rate. Involved in the addition of a carboxymethylaminomethyl (cmnm) group at the wobble position (U34) of certain tRNAs, forming tRNA-cmnm(5)s(2)U34. The sequence is that of tRNA modification GTPase MnmE from Syntrophomonas wolfei subsp. wolfei (strain DSM 2245B / Goettingen).